The sequence spans 247 residues: MSEEYEVTFIDRDERSARFLVRGVTPAFANGLRRAMIADVPTLSIDTLRVVENSSVMFDEQLALRLGLVPLTTPDDYEPGETVTLAIDVEGPATAYSGDLVSSDDKVQPADENIPIIELKDDQQLELEADATLGRGKDHAKHQGGVAVGYRHLQRVEVVGEKGEFEDDEPEILRGVIEEDGDLIETGEFDNDLSQRYPGKEVEVEEVPNAFVFDVETDGSMPVEELVLKAAESIAARADELEEAVAL.

This sequence belongs to the archaeal Rpo3/eukaryotic RPB3 RNA polymerase subunit family. Part of the RNA polymerase complex.

The protein resides in the cytoplasm. It carries out the reaction RNA(n) + a ribonucleoside 5'-triphosphate = RNA(n+1) + diphosphate. In terms of biological role, DNA-dependent RNA polymerase (RNAP) catalyzes the transcription of DNA into RNA using the four ribonucleoside triphosphates as substrates. The protein is DNA-directed RNA polymerase subunit Rpo3 of Natronomonas pharaonis (strain ATCC 35678 / DSM 2160 / CIP 103997 / JCM 8858 / NBRC 14720 / NCIMB 2260 / Gabara) (Halobacterium pharaonis).